A 328-amino-acid chain; its full sequence is MRETVKLIEVARELPVSRKNLQMLLLLLLCGAAAYIINLADPALEPLFLALVFGIVAGNLQRDEEKKRVVERYVPFLLPIGITLYGVNINIPYLGEFHPEIVAATLISTSLIFLTVFWLSSRLKLSRQMSILLACGSGICGVSAIAIISPLIKPRKEEFSAAIMIITAVGLTGAILYPSIAHYASISPDEFAVLAGATLHQTGIVKISSQLFGVEEEALAIKGIRIAMIALVVLILSIIYSESRFYVPWYIVSFLGVALFSSTYLPGEVVQALRPLATVMFATTLAAICYTVNVGRVQRVGVKPLFASYAGWAVGVAFVLLLLGSGAL.

Transmembrane regions (helical) follow at residues 21–39 (LQML…IINL), 43–60 (ALEP…AGNL), 73–95 (YVPF…PYLG), 101–123 (IVAA…SSRL), 130–152 (SILL…SPLI), 162–184 (AIMI…AHYA), 191–213 (FAVL…QLFG), 223–240 (GIRI…SIIY), 245–267 (FYVP…YLPG), 271–293 (QALR…YTVN), and 305–327 (LFAS…GSGA).

The protein belongs to the UPF0324 family.

It localises to the cell membrane. This chain is UPF0324 membrane protein AF_1621, found in Archaeoglobus fulgidus (strain ATCC 49558 / DSM 4304 / JCM 9628 / NBRC 100126 / VC-16).